Reading from the N-terminus, the 593-residue chain is Solute carrier family 40 member 3, chloroplastic (593 aa).

Positions 1–23 (MSMSKLLSPPPTSPPGPALSRLP) are disordered. A chloroplast-targeting transit peptide spans 1–51 (MSMSKLLSPPPTSPPGPALSRLPCRRVAPPPVLPFPFPLRRLTSRRVFATS). The span at 8-17 (SPPPTSPPGP) shows a compositional bias: pro residues. The next 11 membrane-spanning stretches (helical) occupy residues 181–201 (ILPV…AGPL), 219–239 (AAIQ…AFAV), 253–273 (FAVL…LGII), 303–322 (LLCE…KNNP), 323–343 (LTCI…LIFL), 403–423 (YVFV…TFLI), 431–451 (VIGA…FATA), 462–482 (AGAA…VVYL), 493–513 (LFAF…YSAI), 530–550 (IGAT…AVAV), and 557–577 (HFGA…GMYC).

It belongs to the ferroportin (FP) (TC 2.A.100) family. SLC40A subfamily.

It localises to the membrane. The protein localises to the plastid. It is found in the chloroplast envelope. May be involved in iron transport and iron homeostasis. This chain is Solute carrier family 40 member 3, chloroplastic, found in Oryza sativa subsp. japonica (Rice).